Reading from the N-terminus, the 779-residue chain is Protein zer-1 homolog (779 aa).

At A2 the chain carries N-acetylalanine. LRR repeat units lie at residues 226 to 245 (SLVL…IVQL), 246 to 281 (HKLR…KLTR), and 291 to 315 (LGNL…KTDE). 5 ARM repeats span residues 440–480 (RSEQ…NFSI), 524–569 (DNDH…NITD), 571–613 (TPDN…NVAE), 615–656 (KELR…HIMF), and 727–769 (PDKY…HCSN).

Belongs to the zyg-11 family. As to quaternary structure, interacts with the ELOC-ELOB/Elongin BC complex. Part of an E3 ubiquitin ligase complex including ZER1, CUL2 and Elongin BC.

Serves as substrate adapter subunit in the E3 ubiquitin ligase complex ZYG11B-CUL2-Elongin BC. Acts redudantly with ZYG11B to target substrates bearing N-terminal glycine degrons for proteasomal degradation. Involved in the clearance of proteolytic fragments generated by caspase cleavage during apoptosis since N-terminal glycine degrons are strongly enriched at caspase cleavage sites. Also important in the quality control of protein N-myristoylation in which N-terminal glycine degrons are conditionally exposed after a failure of N-myristoylation. In Mus musculus (Mouse), this protein is Protein zer-1 homolog.